The primary structure comprises 32 residues: Growth hormone-related protein 4 (32 aa).

Cys-4 and Cys-11 are oxidised to a cystine.

It belongs to the somatotropin/prolactin family. Glycosylated. As to expression, placental basal zone cells.

It localises to the secreted. The sequence is that of Growth hormone-related protein 4 from Rattus norvegicus (Rat).